The chain runs to 368 residues: Homoserine O-acetyltransferase (368 aa).

In terms of domain architecture, AB hydrolase-1 spans 44 to 350; sequence NAILVAHAWT…AYGHDAFLLE (307 aa). Ser-150 acts as the Nucleophile in catalysis. Arg-217 serves as a coordination point for substrate. Active-site residues include Asp-311 and His-344. Asp-345 provides a ligand contact to substrate.

It belongs to the AB hydrolase superfamily. MetX family. In terms of assembly, homodimer.

The protein localises to the cytoplasm. It catalyses the reaction L-homoserine + acetyl-CoA = O-acetyl-L-homoserine + CoA. It functions in the pathway amino-acid biosynthesis; L-methionine biosynthesis via de novo pathway; O-acetyl-L-homoserine from L-homoserine: step 1/1. In terms of biological role, transfers an acetyl group from acetyl-CoA to L-homoserine, forming acetyl-L-homoserine. This is Homoserine O-acetyltransferase from Geobacter sulfurreducens (strain ATCC 51573 / DSM 12127 / PCA).